Consider the following 492-residue polypeptide: 6-phosphogluconate dehydrogenase, decarboxylating 2 (492 aa).

Residues 12–17, 35–37, 77–79, and asparagine 105 each bind NADP(+); these read GLAVMG, NRT, and IKA. Substrate is bound by residues asparagine 105 and 131 to 133; that span reads SGG. Residue lysine 185 is the Proton acceptor of the active site. Residue 188 to 189 coordinates substrate; that stretch reads HN. The active-site Proton donor is the glutamate 192. Substrate-binding residues include tyrosine 193, lysine 262, arginine 289, arginine 449, and histidine 455.

Belongs to the 6-phosphogluconate dehydrogenase family. Homodimer.

The enzyme catalyses 6-phospho-D-gluconate + NADP(+) = D-ribulose 5-phosphate + CO2 + NADPH. Its pathway is carbohydrate degradation; pentose phosphate pathway; D-ribulose 5-phosphate from D-glucose 6-phosphate (oxidative stage): step 3/3. In terms of biological role, catalyzes the oxidative decarboxylation of 6-phosphogluconate to ribulose 5-phosphate and CO(2), with concomitant reduction of NADP to NADPH. This is 6-phosphogluconate dehydrogenase, decarboxylating 2 (GND2) from Saccharomyces cerevisiae (strain ATCC 204508 / S288c) (Baker's yeast).